We begin with the raw amino-acid sequence, 427 residues long: O-methyltransferase FrzF (427 aa).

An S-adenosyl-L-methionine-binding site is contributed by aspartate 281. Residue histidine 327 is the Proton acceptor of the active site.

This sequence belongs to the class I-like SAM-binding methyltransferase superfamily. Cation-independent O-methyltransferase family. Homodimer.

It carries out the reaction (1S,4S)-4-[(4-hydroxyphenyl)methyl]-2,5-diazaspiro[bicyclo[3.2.1]octane-6,1'-cyclohexan]-4'-one + S-adenosyl-L-methionine = (1S,4S)-4-[(4-methoxyphenyl)methyl]-2,5-diazaspiro[bicyclo[3.2.1]octane-6,1'-cyclohexan]-4'-one + S-adenosyl-L-homocysteine + H(+). It catalyses the reaction (1S,4S)-4-[(4-hydroxyphenyl)methyl]-2-methyl-2,5-diazaspiro[bicyclo[3.2.1]octane-6,1'-cyclohexan]-4'-one + S-adenosyl-L-methionine = (1S,4S)-4-[(4-methoxyphenyl)methyl]-2-methyl-2,5-diazaspiro[bicyclo[3.2.1]octane-6,1'-cyclohexan]-4'-one + S-adenosyl-L-homocysteine + H(+). It functions in the pathway secondary metabolite biosynthesis. Functionally, O-methyltransferase; part of the gene cluster that mediates the biosynthesis of the alkaloid (-)-FR901483, a potent immunosuppressant that shows efficacy in animal models and a probable inhibitor of purine nucleotide biosynthesis by targeting phosphoribosylpyrophosphate amidotransferase (PPAT). Within the pathway, FrzF methylates the phenolic oxygen at position C4. The biosynthesis of (-)-FR901483 starts with the condensation of two L-tyrosines to yield (S,S)-dityrosyl-piperazine. This process occurs in 3 steps with the non-canonical nonribosomal peptide synthetase FrzA catalyzing the reduction of L-tyrosine into L-tyrosinal, the spontaneous condensation of 2 L-tyrosinal units, and the subsequent reduction by the NmrA-like family domain-containing oxidoreductase FrzB. The cytochrome P450 monooxygenase FrzC then performs coupling between N10 and C1' to morph the piperazine into a 1,4-diazabicyclo[3.2.1]octane spiro-fused to a 2,5-cyclohexadienone. The dienone portion is further reduced to cyclohexanone by the flavin-dependent reductase FrzD. The methyltranserases (MTs) FrzE and FrzF are then involved in the methylation at the C10' amine and the C4 phenolic oxygen, respectively. The order of the two MTs appear to be interchangeable. Cleavage of the C9-N10' bond by the dioxygenase FrzG then leads to formation of a conjugated iminium. In addition to the oxidation of C9, an additional dehydrogenation between C7 and C8 can occur to give a likely shunt product. The next biosynthetic step is the intramolecular aldol condensation catalyzed by the newly identified aldolase FrzH to yield an aza-tricyclic product with the formation of a C9-C3' bond. The short-chain dehydrogenase/reductase FrzI then produces dephospho-(-)-FR901483 that is phosphorylated at C4'-OH into (-)-FR901483 by the phosphotransferase FrzJ. In Cladobotryum sp, this protein is O-methyltransferase FrzF.